Reading from the N-terminus, the 205-residue chain is HTH-type transcriptional regulator LuxR (205 aa).

The region spanning 15–75 (LKRKQQLMEI…EVLNHVVRQF (61 aa)) is the HTH tetR-type domain. Residues 39–58 (HADIAEIAQVSVATVFNYFP) constitute a DNA-binding region (H-T-H motif).

Functionally, regulatory protein of bacterial bioluminescence. It probably binds the autoinducer molecule and potentiates the transcription of the bioluminescence operon. The protein is HTH-type transcriptional regulator LuxR (luxR) of Vibrio harveyi (Beneckea harveyi).